The sequence spans 212 residues: Peptide methionine sulfoxide reductase MsrA (212 aa).

The active site involves Cys51.

It belongs to the MsrA Met sulfoxide reductase family.

The enzyme catalyses L-methionyl-[protein] + [thioredoxin]-disulfide + H2O = L-methionyl-(S)-S-oxide-[protein] + [thioredoxin]-dithiol. It catalyses the reaction [thioredoxin]-disulfide + L-methionine + H2O = L-methionine (S)-S-oxide + [thioredoxin]-dithiol. Has an important function as a repair enzyme for proteins that have been inactivated by oxidation. Catalyzes the reversible oxidation-reduction of methionine sulfoxide in proteins to methionine. This Vibrio cholerae serotype O1 (strain ATCC 39541 / Classical Ogawa 395 / O395) protein is Peptide methionine sulfoxide reductase MsrA.